The sequence spans 352 residues: Ferrochelatase (352 aa).

Fe cation is bound by residues His-222 and Glu-303.

It belongs to the ferrochelatase family.

The protein resides in the cytoplasm. The enzyme catalyses heme b + 2 H(+) = protoporphyrin IX + Fe(2+). Its pathway is porphyrin-containing compound metabolism; protoheme biosynthesis; protoheme from protoporphyrin-IX: step 1/1. In terms of biological role, catalyzes the ferrous insertion into protoporphyrin IX. The sequence is that of Ferrochelatase from Brucella melitensis biotype 2 (strain ATCC 23457).